The chain runs to 314 residues: MYNKTLRIATRKSPLALKQTKYVQKKILSLYPDLNIKLVPIVTHGDNILNKSLSKIGGKGLFIKELELALLENKADIAIHSMKDLPVKITKELCLVSICKRGNALDSLVSNNYQSINQLPKGAIVGTSSLRRQCQLITYRPDLIISPLRGNIETRIAKLDQGKYDAIILATEGLNRLRLKNRITQIIPAELSLPSCGQGAIGIQSRLHDKKVLFFLSRLNHINTFIEINAERAFCRKLESGCQIPIGSYAILKKNKIWLRGLVGSPNGKIILKGERIGCYNTGEKMGYSLADELLKNGAKNILNNLHIKQSYCI.

S-(dipyrrolylmethanemethyl)cysteine is present on cysteine 242.

This sequence belongs to the HMBS family. In terms of assembly, monomer. It depends on dipyrromethane as a cofactor.

The enzyme catalyses 4 porphobilinogen + H2O = hydroxymethylbilane + 4 NH4(+). Its pathway is porphyrin-containing compound metabolism; protoporphyrin-IX biosynthesis; coproporphyrinogen-III from 5-aminolevulinate: step 2/4. Functionally, tetrapolymerization of the monopyrrole PBG into the hydroxymethylbilane pre-uroporphyrinogen in several discrete steps. The sequence is that of Porphobilinogen deaminase (hemC) from Buchnera aphidicola subsp. Acyrthosiphon pisum (strain APS) (Acyrthosiphon pisum symbiotic bacterium).